The sequence spans 34 residues: Endoglucanase 1 (34 aa).

The enzyme catalyses Endohydrolysis of (1-&gt;4)-beta-D-glucosidic linkages in cellulose, lichenin and cereal beta-D-glucans.. The sequence is that of Endoglucanase 1 from Sclerotinia sclerotiorum (White mold).